We begin with the raw amino-acid sequence, 429 residues long: UDP-N-acetylglucosamine 1-carboxyvinyltransferase (429 aa).

Position 22–23 (22–23 (KN)) interacts with phosphoenolpyruvate. Position 102 (Arg102) interacts with UDP-N-acetyl-alpha-D-glucosamine. Cys126 functions as the Proton donor in the catalytic mechanism. Cys126 is subject to 2-(S-cysteinyl)pyruvic acid O-phosphothioketal. Residues 131–135 (RPVDL), Asp316, and Ile338 contribute to the UDP-N-acetyl-alpha-D-glucosamine site.

Belongs to the EPSP synthase family. MurA subfamily.

Its subcellular location is the cytoplasm. The catalysed reaction is phosphoenolpyruvate + UDP-N-acetyl-alpha-D-glucosamine = UDP-N-acetyl-3-O-(1-carboxyvinyl)-alpha-D-glucosamine + phosphate. It functions in the pathway cell wall biogenesis; peptidoglycan biosynthesis. Cell wall formation. Adds enolpyruvyl to UDP-N-acetylglucosamine. This is UDP-N-acetylglucosamine 1-carboxyvinyltransferase from Methylorubrum populi (strain ATCC BAA-705 / NCIMB 13946 / BJ001) (Methylobacterium populi).